A 484-amino-acid polypeptide reads, in one-letter code: PTS system N-acetylmuramic acid-specific EIIBC component (484 aa).

The PTS EIIB type-1 domain maps to 1-89; the sequence is MAKITSNTVS…NQLIDSLTSG (89 aa). Catalysis depends on Cys28, which acts as the Phosphocysteine intermediate; for EIIB activity. In terms of domain architecture, PTS EIIC type-1 spans 125–484; that stretch reads SKFATIFTPL…FFGCKDVDLS (360 aa). Helical transmembrane passes span 127–147, 168–188, 194–214, 228–248, 266–286, 310–330, 345–365, 379–399, 409–429, and 451–471; these read FATI…LLGF, LIAY…ILIG, AFGG…LGYN, FFGF…AAII, MILT…LIIM, AAIL…QGFV, LFPI…ALYF, GAII…VTLP, IGGA…LPVG, and IFPG…VGFL.

It is found in the cell inner membrane. It carries out the reaction N-acetyl-beta-D-muramate(out) + N(pros)-phospho-L-histidyl-[protein] = N-acetyl-beta-D-muramate 6-phosphate(in) + L-histidyl-[protein]. The phosphoenolpyruvate-dependent sugar phosphotransferase system (sugar PTS), a major carbohydrate active transport system, catalyzes the phosphorylation of incoming sugar substrates concomitantly with their translocation across the cell membrane. This system is involved in N-acetylmuramic acid (MurNAc) transport, yielding cytoplasmic MurNAc-6-P. Is also able to take up anhydro-N-acetylmuramic acid (anhMurNAc), but cannot phosphorylate the carbon 6, probably because of the 1,6-anhydro ring. The chain is PTS system N-acetylmuramic acid-specific EIIBC component (murP) from Vibrio parahaemolyticus serotype O3:K6 (strain RIMD 2210633).